The chain runs to 156 residues: Adult-specific rigid cuticular protein 15.5 (156 aa).

Residues 23–84 (IGNYAFNYGT…SVKTNEPGTA (62 aa)) enclose the Chitin-binding type R&amp;R domain.

Functionally, component of the rigid cuticle of the spider. The sequence is that of Adult-specific rigid cuticular protein 15.5 from Araneus diadematus (European garden spider).